The chain runs to 443 residues: Thymidine phosphorylase (443 aa).

Belongs to the thymidine/pyrimidine-nucleoside phosphorylase family. As to quaternary structure, homodimer.

The enzyme catalyses thymidine + phosphate = 2-deoxy-alpha-D-ribose 1-phosphate + thymine. It functions in the pathway pyrimidine metabolism; dTMP biosynthesis via salvage pathway; dTMP from thymine: step 1/2. In terms of biological role, the enzymes which catalyze the reversible phosphorolysis of pyrimidine nucleosides are involved in the degradation of these compounds and in their utilization as carbon and energy sources, or in the rescue of pyrimidine bases for nucleotide synthesis. The protein is Thymidine phosphorylase of Shewanella sp. (strain MR-7).